Consider the following 344-residue polypeptide: MKLRIGVIGTGAIGKEHINRITNKLAGGEIVAVTDVNQEAAQQVVTDYSLNAKVYPDDDSLIAAENVDAVLVTSWGPAHESSVLKAIKANKFVFCEKPLATTAEGCMRIVNEEVKAGKRLVQVGFMRRYDSGYVQLKEAIDNRVIGEPLMIHCAHRNPVVGDNYTTDMAVVDTLVHEIDALHWLINDDYESVQVIYPKKSKNALPHLRDPQIVIIETKGGVVINAEIYVNCKYGYDIQCEIVGEDGIVKLPEPSSISLRKDGKFSTDILMDWQRRFVDAYDVEIQDFIDSIQQKGEVSGPTAWDGYIAAVTTDACVKAQESGQKEPVALQEKPEFYQTFTTVKK.

It belongs to the Gfo/Idh/MocA family. Homotetramer.

The catalysed reaction is myo-inositol + NAD(+) = scyllo-inosose + NADH + H(+). The enzyme catalyses 1D-chiro-inositol + NAD(+) = scyllo-inosine + NADH + H(+). Its pathway is polyol metabolism; myo-inositol degradation into acetyl-CoA; acetyl-CoA from myo-inositol: step 1/7. Functionally, involved in the oxidation of myo-inositol (MI) and D-chiro-inositol (DCI) to 2-keto-myo-inositol (2KMI or 2-inosose) and 1-keto-D-chiro-inositol (1KDCI), respectively. This chain is Inositol 2-dehydrogenase/D-chiro-inositol 3-dehydrogenase, found in Bacillus licheniformis (strain ATCC 14580 / DSM 13 / JCM 2505 / CCUG 7422 / NBRC 12200 / NCIMB 9375 / NCTC 10341 / NRRL NRS-1264 / Gibson 46).